Reading from the N-terminus, the 163-residue chain is Small ribosomal subunit protein uS9 (163 aa).

A compositionally biased stretch (low complexity) spans 1 to 25 (MAENTNNSAVTETEETTAAFTTETN). The interval 1–40 (MAENTNNSAVTETEETTAAFTTETNSGAGTGTSTIAPGYG) is disordered.

It belongs to the universal ribosomal protein uS9 family.

This chain is Small ribosomal subunit protein uS9, found in Bifidobacterium animalis subsp. lactis (strain AD011).